A 252-amino-acid chain; its full sequence is MASLNQDQIKTLEQSRQRLVQLTRSLASLIGSLNQSDPLPSWSSLQSQAGIISNNLLSISEHLSDNKDLLSALVAYPGPSYPGRTQAPTLEQLLRTKLDPRVEDWVSRGRRAGASALEDRGALSESALAELWDWAPVEANQEARRRNWGGNFTLEEREMGIQNVVTGLRRQLEDEDEEESESESEEEGEGEEEEMEVVGVRRRSGAGAGLEFDIAAPTPGSRQQQQQKAAGPAVPLEDILRYMTTGIPPTQR.

Positions 6–30 form a coiled coil; sequence QDQIKTLEQSRQRLVQLTRSLASLI. The segment at 170 to 252 is disordered; the sequence is RQLEDEDEEE…MTTGIPPTQR (83 aa). Over residues 173–196 the composition is skewed to acidic residues; it reads EDEDEEESESESEEEGEGEEEEME.

Belongs to the Mediator complex subunit 8 family. In terms of assembly, component of the Mediator complex.

Its subcellular location is the nucleus. Its function is as follows. Component of the Mediator complex, a coactivator involved in the regulated transcription of nearly all RNA polymerase II-dependent genes. Mediator functions as a bridge to convey information from gene-specific regulatory proteins to the basal RNA polymerase II transcription machinery. Mediator is recruited to promoters by direct interactions with regulatory proteins and serves as a scaffold for the assembly of a functional preinitiation complex with RNA polymerase II and the general transcription factors. The sequence is that of Mediator of RNA polymerase II transcription subunit 8 (med8) from Neosartorya fischeri (strain ATCC 1020 / DSM 3700 / CBS 544.65 / FGSC A1164 / JCM 1740 / NRRL 181 / WB 181) (Aspergillus fischerianus).